The chain runs to 550 residues: Methionine--tRNA ligase (550 aa).

A 'HIGH' region motif is present at residues 10–22 (LPYPNNSSPHLGN). A 'KMSKS' region motif is present at residues 336–340 (KFSKS). K339 provides a ligand contact to ATP.

The protein belongs to the class-I aminoacyl-tRNA synthetase family.

It catalyses the reaction tRNA(Met) + L-methionine + ATP = L-methionyl-tRNA(Met) + AMP + diphosphate. This is Methionine--tRNA ligase (MARS) from Acanthamoeba polyphaga mimivirus (APMV).